Reading from the N-terminus, the 3416-residue chain is Genome polyprotein (3416 aa).

The interval 1–34 (MAKGAVLKGKGGGPPRRVPKETAKKTRQGPGRLP) is disordered. Residues 1 to 99 (MAKGAVLKGK…NRRRGKRRST (99 aa)) are Cytoplasmic-facing. Positions 97–117 (RSTTGLLTSILLACLATLVIS) are cleaved as a propeptide — ER anchor for the capsid protein C, removed in mature form by serine protease NS3. The chain crosses the membrane as a helical span at residues 100–120 (TGLLTSILLACLATLVISATI). The Extracellular segment spans residues 121 to 243 (RRERTGDMVI…HLTRVEGWVW (123 aa)). N-linked (GlcNAc...) asparagine; by host glycosylation is present at N145. The chain crosses the membrane as a helical span at residues 244–261 (KNKLLTMAFCAVVWMVTD). Residue S262 is a topological domain, cytoplasmic. A helical membrane pass occupies residues 263–281 (LPTRFIVITVALCLAPTYA). The Extracellular portion of the chain corresponds to 282–728 (TRCTHLQNRD…HTAFGAAFNT (447 aa)). 6 disulfide bridges follow: C284/C311, C341/C397, C341/C402, C355/C386, C373/C397, and C373/C402. A fusion peptide region spans residues 379–392 (DRGWGNHCGLFGKG). Residue N435 is glycosylated (N-linked (GlcNAc...) asparagine; by host). 2 disulfides stabilise this stretch: C467/C571 and C588/C619. A helical transmembrane segment spans residues 729–749 (IFGGVGFLPRILLGVALAWLG). The Cytoplasmic portion of the chain corresponds to 750 to 756 (LNSRNPT). Residues 757–777 (LSVGFLITGGLVLTMTLGVGA) form a helical membrane-spanning segment. Over 778–1134 (DMGCAIDANR…RSMVLADNGA (357 aa)) the chain is Extracellular. Disulfide bonds link C781/C792, C832/C922, C957/C1002, C1059/C1108, C1070/C1092, and C1091/C1095. Residues N862, N985, and N1001 are each glycosylated (N-linked (GlcNAc...) asparagine; by host). The helical transmembrane segment at 1135–1155 (MLSEGGVPGIVAVFVVLELVI) threads the bilayer. Topologically, residues 1156 to 1162 (RRRPTTG) are cytoplasmic. Residues 1163 to 1183 (TSVVWCGVVVLGLVVTGLVTI) traverse the membrane as a helical segment. Residues 1184 to 1189 (EGLCRY) lie on the Lumenal side of the membrane. The helical transmembrane segment at 1190–1210 (VVAVGILMSMELGPEIVALVL) threads the bilayer. Over 1211–1235 (LQAVFDMRTGLLVAFAVKRAYTTRE) the chain is Cytoplasmic. The helical transmembrane segment at 1236-1256 (AVVTYFLLLVLELGFPEASLS) threads the bilayer. At 1257–1295 (NIWKWADSLAMGTLILQACSQEGRARVGYLLAAMMTQKD) the chain is on the lumenal side. The chain crosses the membrane as a helical span at residues 1296 to 1316 (MAIIHTGLTIFLSAATAMAVW). Topologically, residues 1317–1361 (SMIKGQRDQKGLSWATPLVGLFGGEGVGLRLLAFRRLAERRNRRS) are cytoplasmic. A helical transmembrane segment spans residues 1362 to 1379 (FSEPLTVVGVMLTVASGM). Residues 1380 to 1384 (VRHTS) are Lumenal-facing. A helical membrane pass occupies residues 1385 to 1405 (QEALCALVAGAFLLLMMVLGT). Over 1406-1458 (RKMQLIAEWCGEVEWNPDLVNEGGEVNLKVRQDAMGNLHLTEVEKEERAMALW) the chain is Cytoplasmic. Residues 1412-1451 (AEWCGEVEWNPDLVNEGGEVNLKVRQDAMGNLHLTEVEKE) form an interacts with and activates NS3 protease region. The helical intramembrane region spans 1459-1479 (LLAGLVASAFHWAGILIVLAI). Residues 1480–2162 (WTFFEMLSSG…RMAERDAPEA (683 aa)) lie on the Cytoplasmic side of the membrane. In terms of domain architecture, Peptidase S7 spans 1492–1671 (SELVFSGQGT…EAEKSRPELP (180 aa)). Residues H1545, D1569, and S1629 each act as charge relay system; for serine protease NS3 activity in the active site. In terms of domain architecture, Helicase ATP-binding spans 1677–1833 (TGWMSKGQIT…ESNGAIMSEE (157 aa)). 1690-1697 (MHPGSGKT) is a binding site for ATP. Positions 1781–1784 (DEAH) match the DEAH box motif. One can recognise a Helicase C-terminal domain in the interval 1844 to 2002 (GFDWITEYEG…TLRGPVATFY (159 aa)). K1885 is modified (N6-acetyllysine; by host). The helical transmembrane segment at 2163 to 2183 (FLTIVEVAVLGVATLGILWCF) threads the bilayer. The Lumenal portion of the chain corresponds to 2184–2191 (VARTSVSR). The segment at residues 2192–2211 (MFLGTVVLFAALLLLWIGGV) is an intramembrane region (helical). D2212 is a topological domain (lumenal). A helical membrane pass occupies residues 2213 to 2233 (YGYMAGIALIFYIFLTVLQPE). Residues 2234–2246 (PGKQRSSDDNRLA) lie on the Cytoplasmic side of the membrane. A helical membrane pass occupies residues 2247–2267 (YFLLGLLSLAGLVTANEMGML). The Lumenal segment spans residues 2268 to 2301 (DKTKADLAGLMWHGEQRHPAWEEWTNVDIQPARS). The segment at residues 2302 to 2322 (WGTYVLIVSLFTPYMLHQLQT) is an intramembrane region (helical). Residues 2323–2345 (KIQQLVNSSVASGAQAMRDLGGG) lie on the Lumenal side of the membrane. Positions 2346–2366 (TPFFGVAGHVIALGVTSLVGA) form an intramembrane region, helical. Residues 2367-2368 (TP) lie on the Lumenal side of the membrane. Residues 2369-2389 (LSLGLGVALAAFHLAIVASGL) form a helical membrane-spanning segment. The Cytoplasmic portion of the chain corresponds to 2390-2432 (EAELTQRAHRVFFSAMVKNPMVDGDVINPFPDGEPKPVLYERR). The helical transmembrane segment at 2433 to 2453 (MSLILAIALCMVSVVLNRTAA) threads the bilayer. Residues 2454-2476 (SMTEAGAVGLAALGQLVHPETET) lie on the Lumenal side of the membrane. A helical transmembrane segment spans residues 2477-2497 (LWTMPMACGMAGLVRGSFWGL). The Cytoplasmic portion of the chain corresponds to 2498–3416 (LPMGHRLWLK…WDLKLESNII (919 aa)). Residues 2514 to 2778 (GGADGETLGD…EVDLGTGTRC (265 aa)) enclose the mRNA cap 0-1 NS5-type MT domain. Residue S2569 participates in S-adenosyl-L-methionine binding. S2569 bears the Phosphoserine mark. The For 2'-O-MTase activity role is filled by K2574. The S-adenosyl-L-methionine site is built by G2599, W2600, T2617, I2618, D2644, and V2645. D2659 acts as the For 2'-O-MTase activity in catalysis. I2660 is a binding site for S-adenosyl-L-methionine. Active-site for 2'-O-MTase activity residues include K2696 and E2732. The interval 2732–2736 (EMYFS) is interaction with host SCRIB. Residue Y2734 coordinates S-adenosyl-L-methionine. Zn(2+) contacts are provided by E2952, H2956, C2961, and C2964. Residues 3042–3191 (GLFYADDTAG…RPIDDRFGKA (150 aa)) enclose the RdRp catalytic domain. Positions 3226, 3242, and 3361 each coordinate Zn(2+).

It in the N-terminal section; belongs to the class I-like SAM-binding methyltransferase superfamily. mRNA cap 0-1 NS5-type methyltransferase family. As to quaternary structure, homodimer. Interacts (via N-terminus) with host EXOC1 (via C-terminus); this interaction results in EXOC1 degradation through the proteasome degradation pathway. In terms of assembly, forms heterodimers with envelope protein E in the endoplasmic reticulum and Golgi. Homodimer; in the endoplasmic reticulum and Golgi. Interacts with protein prM. Interacts with non-structural protein 1. As to quaternary structure, homodimer; Homohexamer when secreted. Interacts with envelope protein E. In terms of assembly, interacts (via N-terminus) with serine protease NS3. Forms a heterodimer with serine protease NS3. May form homooligomers. As to quaternary structure, forms a heterodimer with NS2B. Interacts with NS4B. Interacts with unphosphorylated RNA-directed RNA polymerase NS5; this interaction stimulates RNA-directed RNA polymerase NS5 guanylyltransferase activity. In terms of assembly, interacts with serine protease NS3. Homodimer. Interacts with host STAT2; this interaction inhibits the phosphorylation of the latter, and, when all viral proteins are present (polyprotein), targets STAT2 for degradation. Interacts with serine protease NS3. In terms of processing, specific enzymatic cleavages in vivo yield mature proteins. Cleavages in the lumen of endoplasmic reticulum are performed by host signal peptidase, whereas cleavages in the cytoplasmic side are performed by serine protease NS3. Signal cleavage at the 2K-4B site requires a prior NS3 protease-mediated cleavage at the 4A-2K site. Cleaved in post-Golgi vesicles by a host furin, releasing the mature small envelope protein M, and peptide pr. This cleavage is incomplete as up to 30% of viral particles still carry uncleaved prM. Post-translationally, N-glycosylated. In terms of processing, N-glycosylated. The excreted form is glycosylated and this is required for efficient secretion of the protein from infected cells. Acetylated by host KAT5. Acetylation modulates NS3 RNA-binding and unwinding activities and plays an important positive role for viral replication. Post-translationally, phosphorylated on serines residues. This phosphorylation may trigger NS5 nuclear localization.

It is found in the virion. It localises to the host nucleus. The protein resides in the host cytoplasm. Its subcellular location is the host perinuclear region. The protein localises to the secreted. It is found in the virion membrane. It localises to the host endoplasmic reticulum membrane. The catalysed reaction is Selective hydrolysis of -Xaa-Xaa-|-Yaa- bonds in which each of the Xaa can be either Arg or Lys and Yaa can be either Ser or Ala.. It carries out the reaction RNA(n) + a ribonucleoside 5'-triphosphate = RNA(n+1) + diphosphate. The enzyme catalyses a ribonucleoside 5'-triphosphate + H2O = a ribonucleoside 5'-diphosphate + phosphate + H(+). It catalyses the reaction ATP + H2O = ADP + phosphate + H(+). The catalysed reaction is a 5'-end (5'-triphosphoguanosine)-ribonucleoside in mRNA + S-adenosyl-L-methionine = a 5'-end (N(7)-methyl 5'-triphosphoguanosine)-ribonucleoside in mRNA + S-adenosyl-L-homocysteine. It carries out the reaction a 5'-end (N(7)-methyl 5'-triphosphoguanosine)-ribonucleoside in mRNA + S-adenosyl-L-methionine = a 5'-end (N(7)-methyl 5'-triphosphoguanosine)-(2'-O-methyl-ribonucleoside) in mRNA + S-adenosyl-L-homocysteine + H(+). In terms of biological role, plays a role in virus budding by binding to the cell membrane and gathering the viral RNA into a nucleocapsid that forms the core of a mature virus particle. During virus entry, may induce genome penetration into the host cytoplasm after hemifusion induced by the surface proteins. Can migrate to the cell nucleus where it modulates host functions. Inhibits RNA silencing by interfering with host Dicer. Functionally, prevents premature fusion activity of envelope proteins in trans-Golgi by binding to envelope protein E at pH6.0. After virion release in extracellular space, gets dissociated from E dimers. Its function is as follows. Acts as a chaperone for envelope protein E during intracellular virion assembly by masking and inactivating envelope protein E fusion peptide. prM is the only viral peptide matured by host furin in the trans-Golgi network probably to avoid catastrophic activation of the viral fusion activity in acidic Golgi compartment prior to virion release. prM-E cleavage is inefficient, and many virions are only partially matured. These uncleaved prM would play a role in immune evasion. In terms of biological role, may play a role in virus budding. Exerts cytotoxic effects by activating a mitochondrial apoptotic pathway through M ectodomain. May display a viroporin activity. Binds to host cell surface receptor and mediates fusion between viral and cellular membranes. Envelope protein is synthesized in the endoplasmic reticulum in the form of heterodimer with protein prM. They play a role in virion budding in the ER, and the newly formed immature particle is covered with 60 spikes composed of heterodimer between precursor prM and envelope protein E. The virion is transported to the Golgi apparatus where the low pH causes dissociation of PrM-E heterodimers and formation of E homodimers. prM-E cleavage is inefficient, and many virions are only partially matured. These uncleaved prM would play a role in immune evasion. Functionally, involved in immune evasion, pathogenesis and viral replication. Once cleaved off the polyprotein, is targeted to three destinations: the viral replication cycle, the plasma membrane and the extracellular compartment. Essential for viral replication. Required for formation of the replication complex and recruitment of other non-structural proteins to the ER-derived membrane structures. Excreted as a hexameric lipoparticle that plays a role against host immune response. Antagonizing the complement function. Binds to the host macrophages and dendritic cells. Inhibits signal transduction originating from Toll-like receptor 3 (TLR3). Its function is as follows. Component of the viral RNA replication complex that functions in virion assembly and antagonizes the host immune response. In terms of biological role, required cofactor for the serine protease function of NS3. May have membrane-destabilizing activity and form viroporins. Displays three enzymatic activities: serine protease, NTPase and RNA helicase. NS3 serine protease, in association with NS2B, performs its autocleavage and cleaves the polyprotein at dibasic sites in the cytoplasm: C-prM, NS2A-NS2B, NS2B-NS3, NS3-NS4A, NS4A-2K and NS4B-NS5. NS3 RNA helicase binds RNA and unwinds dsRNA in the 3' to 5' direction. Functionally, regulates the ATPase activity of the NS3 helicase activity. NS4A allows NS3 helicase to conserve energy during unwinding. Its function is as follows. Functions as a signal peptide for NS4B and is required for the interferon antagonism activity of the latter. In terms of biological role, induces the formation of ER-derived membrane vesicles where the viral replication takes place. Inhibits interferon (IFN)-induced host STAT1 phosphorylation and nuclear translocation, thereby preventing the establishment of cellular antiviral state by blocking the IFN-alpha/beta pathway. Inhibits STAT2 translocation in the nucleus after IFN-alpha treatment. Replicates the viral (+) and (-) RNA genome, and performs the capping of genomes in the cytoplasm. NS5 methylates viral RNA cap at guanine N-7 and ribose 2'-O positions. Besides its role in RNA genome replication, also prevents the establishment of cellular antiviral state by blocking the interferon-alpha/beta (IFN-alpha/beta) signaling pathway. Inhibits host TYK2 and STAT2 phosphorylation, thereby preventing activation of JAK-STAT signaling pathway. The polypeptide is Genome polyprotein (Homo sapiens (Human)).